The primary structure comprises 193 residues: Holliday junction branch migration complex subunit RuvA (193 aa).

Positions 1 to 64 (MIGRIAGVLL…EDAHLLYGFG (64 aa)) are domain I. The domain II stretch occupies residues 65–139 (TAEERSTFRE…GKIGADLGAM (75 aa)). A flexible linker region spans residues 139 to 143 (MAGAA). Residues 144–193 (SASDHASDILNALLALGYSEKEALAAVKNVPAGTGVSEGIKLALKALSKG) form a domain III region.

Belongs to the RuvA family. As to quaternary structure, homotetramer. Forms an RuvA(8)-RuvB(12)-Holliday junction (HJ) complex. HJ DNA is sandwiched between 2 RuvA tetramers; dsDNA enters through RuvA and exits via RuvB. An RuvB hexamer assembles on each DNA strand where it exits the tetramer. Each RuvB hexamer is contacted by two RuvA subunits (via domain III) on 2 adjacent RuvB subunits; this complex drives branch migration. In the full resolvosome a probable DNA-RuvA(4)-RuvB(12)-RuvC(2) complex forms which resolves the HJ.

The protein localises to the cytoplasm. Functionally, the RuvA-RuvB-RuvC complex processes Holliday junction (HJ) DNA during genetic recombination and DNA repair, while the RuvA-RuvB complex plays an important role in the rescue of blocked DNA replication forks via replication fork reversal (RFR). RuvA specifically binds to HJ cruciform DNA, conferring on it an open structure. The RuvB hexamer acts as an ATP-dependent pump, pulling dsDNA into and through the RuvAB complex. HJ branch migration allows RuvC to scan DNA until it finds its consensus sequence, where it cleaves and resolves the cruciform DNA. The protein is Holliday junction branch migration complex subunit RuvA of Paraburkholderia xenovorans (strain LB400).